The sequence spans 931 residues: Bifunctional glutamine synthetase adenylyltransferase/adenylyl-removing enzyme (931 aa).

The adenylyl removase stretch occupies residues 1 to 434 (MTLAPADLPA…STEFAALLAP (434 aa)). Positions 441 to 931 (PDALANYWRS…ACIAAELPFA (491 aa)) are adenylyl transferase.

This sequence belongs to the GlnE family. Mg(2+) serves as cofactor.

It catalyses the reaction [glutamine synthetase]-O(4)-(5'-adenylyl)-L-tyrosine + phosphate = [glutamine synthetase]-L-tyrosine + ADP. The catalysed reaction is [glutamine synthetase]-L-tyrosine + ATP = [glutamine synthetase]-O(4)-(5'-adenylyl)-L-tyrosine + diphosphate. In terms of biological role, involved in the regulation of glutamine synthetase GlnA, a key enzyme in the process to assimilate ammonia. When cellular nitrogen levels are high, the C-terminal adenylyl transferase (AT) inactivates GlnA by covalent transfer of an adenylyl group from ATP to specific tyrosine residue of GlnA, thus reducing its activity. Conversely, when nitrogen levels are low, the N-terminal adenylyl removase (AR) activates GlnA by removing the adenylyl group by phosphorolysis, increasing its activity. The regulatory region of GlnE binds the signal transduction protein PII (GlnB) which indicates the nitrogen status of the cell. The polypeptide is Bifunctional glutamine synthetase adenylyltransferase/adenylyl-removing enzyme (Stenotrophomonas maltophilia (strain R551-3)).